We begin with the raw amino-acid sequence, 126 residues long: Late histone H2A.3, gonadal (126 aa).

A compositionally biased stretch (basic residues) spans 1–18 (MSGRGKGAKAKGKAKSRS). The tract at residues 1–21 (MSGRGKGAKAKGKAKSRSSRA) is disordered. At Ser2 the chain carries N-acetylserine. Ser2 bears the Phosphoserine mark. Gln104 bears the N5-methylglutamine mark. Lys119 is covalently cross-linked (Glycyl lysine isopeptide (Lys-Gly) (interchain with G-Cter in ubiquitin)).

This sequence belongs to the histone H2A family. The nucleosome is a histone octamer containing two molecules each of H2A, H2B, H3 and H4 assembled in one H3-H4 heterotetramer and two H2A-H2B heterodimers. The octamer wraps approximately 147 bp of DNA. Post-translationally, monoubiquitination of Lys-119 gives a specific tag for epigenetic transcriptional repression. Phosphorylation of Ser-2 directly represses transcription.

The protein localises to the nucleus. Its subcellular location is the chromosome. In terms of biological role, core component of nucleosome. Nucleosomes wrap and compact DNA into chromatin, limiting DNA accessibility to the cellular machineries which require DNA as a template. Histones thereby play a central role in transcription regulation, DNA repair, DNA replication and chromosomal stability. DNA accessibility is regulated via a complex set of post-translational modifications of histones, also called histone code, and nucleosome remodeling. This chain is Late histone H2A.3, gonadal, found in Psammechinus miliaris (Green sea urchin).